A 199-amino-acid chain; its full sequence is Photosystem I reaction center subunit XI (199 aa).

The next 2 helical transmembrane spans lie at 108–128 (VTAGLLSAIGAVHIMTALLVL) and 165–185 (FWLGGCGGAVFAWLLVGTLHL).

It belongs to the PsaL family.

Its subcellular location is the cellular thylakoid membrane. This is Photosystem I reaction center subunit XI from Prochlorococcus marinus (strain MIT 9215).